The sequence spans 723 residues: Heme/hemopexin utilization protein C (723 aa).

An N-terminal signal peptide occupies residues 1–21 (MRFSKLSLAITTTLVTANALA). Positions 36-147 (DPSRFAYTPE…LGGVVAMRTP (112 aa)) constitute a TBDR plug domain. In terms of domain architecture, TBDR beta-barrel spans 158–723 (KFGVKIRQGY…NAKISAVYSF (566 aa)). A TonB C-terminal box motif is present at residues 706-723 (SLMEGTGRNAKISAVYSF).

This sequence belongs to the TonB-dependent receptor family.

The protein resides in the cell outer membrane. In terms of biological role, required for utilization of free heme at low concentrations. In Haemophilus influenzae (strain ATCC 51907 / DSM 11121 / KW20 / Rd), this protein is Heme/hemopexin utilization protein C (hxuC).